A 471-amino-acid chain; its full sequence is Glutamate--tRNA ligase (471 aa).

The 'HIGH' region signature appears at 9-19 (PSPTGYLHVGG). Positions 98, 100, 125, and 127 each coordinate Zn(2+). The short motif at 237-241 (KLSKR) is the 'KMSKS' region element. Lysine 240 lines the ATP pocket.

Belongs to the class-I aminoacyl-tRNA synthetase family. Glutamate--tRNA ligase type 1 subfamily. In terms of assembly, monomer. Zn(2+) is required as a cofactor.

The protein localises to the cytoplasm. The enzyme catalyses tRNA(Glu) + L-glutamate + ATP = L-glutamyl-tRNA(Glu) + AMP + diphosphate. Catalyzes the attachment of glutamate to tRNA(Glu) in a two-step reaction: glutamate is first activated by ATP to form Glu-AMP and then transferred to the acceptor end of tRNA(Glu). This is Glutamate--tRNA ligase from Yersinia enterocolitica serotype O:8 / biotype 1B (strain NCTC 13174 / 8081).